The primary structure comprises 621 residues: Methionine--tRNA ligase (621 aa).

The 'HIGH' region signature appears at 11–21 (PYANGPRHIGH). Zn(2+) contacts are provided by Cys143, Cys146, Cys156, and Cys159. The short motif at 347-351 (KFSSS) is the 'KMSKS' region element. Ser350 is a binding site for ATP.

The protein belongs to the class-I aminoacyl-tRNA synthetase family. MetG type 1 subfamily. In terms of assembly, monomer. Zn(2+) is required as a cofactor.

The protein resides in the cytoplasm. The enzyme catalyses tRNA(Met) + L-methionine + ATP = L-methionyl-tRNA(Met) + AMP + diphosphate. In terms of biological role, is required not only for elongation of protein synthesis but also for the initiation of all mRNA translation through initiator tRNA(fMet) aminoacylation. This chain is Methionine--tRNA ligase, found in Bifidobacterium longum (strain NCC 2705).